Consider the following 140-residue polypeptide: Zinc finger SWIM domain-containing protein 7 (140 aa).

The SWIM-type zinc finger occupies 66 to 114 (YQVLGSSSKTYTCLASCHYCSCPAFAFSVLRKSDSILCKHLLAVYLSQV).

It belongs to the SWS1 family. As to quaternary structure, interacts with RAD51D and XRCC3; involved in homologous recombination repair. Interacts with SWSAP1; they form a functional complex involved in homologous recombination repair and stabilize each other. In terms of tissue distribution, expressed in ovary and testis.

The protein localises to the nucleus. Functionally, involved in early stages of the homologous recombination repair (HRR) pathway of double-stranded DNA breaks arising during DNA replication or induced by DNA-damaging agents. Required for meiotic progression, hence for fertility. The polypeptide is Zinc finger SWIM domain-containing protein 7 (ZSWIM7) (Homo sapiens (Human)).